The following is a 159-amino-acid chain: MDLEIFDQTTAQLPNEQLEMVRDLLQYAAKELSLSENTEMSLTFVNNPEIKKLNAQYRNVDRATDVLSFAAEEAGDETPIIMDPEMAAEIPVNLGDLFISIDKVAEQAKFLGHSVDRELGFLAVHGFLHLNGYDHEEPADEEKMFKLQREILDGYGLTR.

Positions 125, 129, and 135 each coordinate Zn(2+).

The protein belongs to the endoribonuclease YbeY family. The cofactor is Zn(2+).

Its subcellular location is the cytoplasm. Single strand-specific metallo-endoribonuclease involved in late-stage 70S ribosome quality control and in maturation of the 3' terminus of the 16S rRNA. This chain is Endoribonuclease YbeY, found in Limosilactobacillus reuteri (strain DSM 20016) (Lactobacillus reuteri).